A 225-amino-acid polypeptide reads, in one-letter code: 2-C-methyl-D-erythritol 4-phosphate cytidylyltransferase (225 aa).

This sequence belongs to the IspD/TarI cytidylyltransferase family. IspD subfamily.

The enzyme catalyses 2-C-methyl-D-erythritol 4-phosphate + CTP + H(+) = 4-CDP-2-C-methyl-D-erythritol + diphosphate. Its pathway is isoprenoid biosynthesis; isopentenyl diphosphate biosynthesis via DXP pathway; isopentenyl diphosphate from 1-deoxy-D-xylulose 5-phosphate: step 2/6. Catalyzes the formation of 4-diphosphocytidyl-2-C-methyl-D-erythritol from CTP and 2-C-methyl-D-erythritol 4-phosphate (MEP). The polypeptide is 2-C-methyl-D-erythritol 4-phosphate cytidylyltransferase (Chromobacterium violaceum (strain ATCC 12472 / DSM 30191 / JCM 1249 / CCUG 213 / NBRC 12614 / NCIMB 9131 / NCTC 9757 / MK)).